The sequence spans 511 residues: Bifunctional purine biosynthesis protein PurH (511 aa).

Positions Met-1 to Val-144 constitute an MGS-like domain.

This sequence belongs to the PurH family.

The enzyme catalyses (6R)-10-formyltetrahydrofolate + 5-amino-1-(5-phospho-beta-D-ribosyl)imidazole-4-carboxamide = 5-formamido-1-(5-phospho-D-ribosyl)imidazole-4-carboxamide + (6S)-5,6,7,8-tetrahydrofolate. It carries out the reaction IMP + H2O = 5-formamido-1-(5-phospho-D-ribosyl)imidazole-4-carboxamide. It participates in purine metabolism; IMP biosynthesis via de novo pathway; 5-formamido-1-(5-phospho-D-ribosyl)imidazole-4-carboxamide from 5-amino-1-(5-phospho-D-ribosyl)imidazole-4-carboxamide (10-formyl THF route): step 1/1. It functions in the pathway purine metabolism; IMP biosynthesis via de novo pathway; IMP from 5-formamido-1-(5-phospho-D-ribosyl)imidazole-4-carboxamide: step 1/1. This is Bifunctional purine biosynthesis protein PurH from Pediococcus pentosaceus (strain ATCC 25745 / CCUG 21536 / LMG 10740 / 183-1w).